We begin with the raw amino-acid sequence, 89 residues long: Cell division topological specificity factor (89 aa).

It belongs to the MinE family.

In terms of biological role, prevents the cell division inhibition by proteins MinC and MinD at internal division sites while permitting inhibition at polar sites. This ensures cell division at the proper site by restricting the formation of a division septum at the midpoint of the long axis of the cell. This Desulforudis audaxviator (strain MP104C) protein is Cell division topological specificity factor.